The following is a 102-amino-acid chain: Putative pterin-4-alpha-carbinolamine dehydratase (102 aa).

This sequence belongs to the pterin-4-alpha-carbinolamine dehydratase family.

The catalysed reaction is (4aS,6R)-4a-hydroxy-L-erythro-5,6,7,8-tetrahydrobiopterin = (6R)-L-erythro-6,7-dihydrobiopterin + H2O. This Burkholderia cenocepacia (strain HI2424) protein is Putative pterin-4-alpha-carbinolamine dehydratase.